Consider the following 249-residue polypeptide: 2,3-bisphosphoglycerate-dependent phosphoglycerate mutase (249 aa).

Substrate-binding positions include 9 to 16, 22 to 23, Arg61, 88 to 91, Lys99, 115 to 116, and 184 to 185; these read RHGQSQWN, TG, ERHY, RR, and GN. Residue His10 is the Tele-phosphohistidine intermediate of the active site. Residue Glu88 is the Proton donor/acceptor of the active site.

It belongs to the phosphoglycerate mutase family. BPG-dependent PGAM subfamily. As to quaternary structure, homodimer.

The catalysed reaction is (2R)-2-phosphoglycerate = (2R)-3-phosphoglycerate. Its pathway is carbohydrate degradation; glycolysis; pyruvate from D-glyceraldehyde 3-phosphate: step 3/5. In terms of biological role, catalyzes the interconversion of 2-phosphoglycerate and 3-phosphoglycerate. The sequence is that of 2,3-bisphosphoglycerate-dependent phosphoglycerate mutase from Xylella fastidiosa (strain 9a5c).